Reading from the N-terminus, the 238-residue chain is ATP-dependent dethiobiotin synthetase BioD (238 aa).

Residue 12-17 (EVGKTV) coordinates ATP. Residue T16 coordinates Mg(2+). K37 is an active-site residue. Substrate is bound at residue T41. ATP is bound by residues D50, 109-112 (EGAG), 170-171 (GS), and 200-202 (PAG). The Mg(2+) site is built by D50 and E109.

This sequence belongs to the dethiobiotin synthetase family. Homodimer. Requires Mg(2+) as cofactor.

Its subcellular location is the cytoplasm. The catalysed reaction is (7R,8S)-7,8-diammoniononanoate + CO2 + ATP = (4R,5S)-dethiobiotin + ADP + phosphate + 3 H(+). Its pathway is cofactor biosynthesis; biotin biosynthesis; biotin from 7,8-diaminononanoate: step 1/2. In terms of biological role, catalyzes a mechanistically unusual reaction, the ATP-dependent insertion of CO2 between the N7 and N8 nitrogen atoms of 7,8-diaminopelargonic acid (DAPA, also called 7,8-diammoniononanoate) to form a ureido ring. This Streptomyces avermitilis (strain ATCC 31267 / DSM 46492 / JCM 5070 / NBRC 14893 / NCIMB 12804 / NRRL 8165 / MA-4680) protein is ATP-dependent dethiobiotin synthetase BioD.